We begin with the raw amino-acid sequence, 151 residues long: D-aminoacyl-tRNA deacylase (151 aa).

Positions G136 to P137 match the Gly-cisPro motif, important for rejection of L-amino acids motif.

The protein belongs to the DTD family. Homodimer.

The protein resides in the cytoplasm. It carries out the reaction glycyl-tRNA(Ala) + H2O = tRNA(Ala) + glycine + H(+). The enzyme catalyses a D-aminoacyl-tRNA + H2O = a tRNA + a D-alpha-amino acid + H(+). An aminoacyl-tRNA editing enzyme that deacylates mischarged D-aminoacyl-tRNAs. Also deacylates mischarged glycyl-tRNA(Ala), protecting cells against glycine mischarging by AlaRS. Acts via tRNA-based rather than protein-based catalysis; rejects L-amino acids rather than detecting D-amino acids in the active site. By recycling D-aminoacyl-tRNA to D-amino acids and free tRNA molecules, this enzyme counteracts the toxicity associated with the formation of D-aminoacyl-tRNA entities in vivo and helps enforce protein L-homochirality. This Streptococcus gordonii (strain Challis / ATCC 35105 / BCRC 15272 / CH1 / DL1 / V288) protein is D-aminoacyl-tRNA deacylase.